The following is a 157-amino-acid chain: ABA-responsive protein ABR17 (157 aa).

This sequence belongs to the BetVI family.

In Pisum sativum (Garden pea), this protein is ABA-responsive protein ABR17.